Consider the following 418-residue polypeptide: rRNA methyltransferase 3, mitochondrial (418 aa).

Residues 1-40 (MAAPAKGMWCSLGSLLRVVQTRDLNARRWVRALRRSPVRV) constitute a mitochondrion transit peptide. Residues 41-90 (LSPSGQVEERKRAPDQQPRKAVPKASSQGQRQKQPLETSPSQTPHTWEEA) are disordered. A compositionally biased stretch (basic and acidic residues) spans 47–58 (VEERKRAPDQQP). Residues 65–85 (ASSQGQRQKQPLETSPSQTPH) are compositionally biased toward polar residues. The S-adenosyl-L-methionine site is built by Gly354, Ile378, and Leu387.

The protein belongs to the class IV-like SAM-binding methyltransferase superfamily. RNA methyltransferase TrmH family.

Its subcellular location is the mitochondrion. It carries out the reaction guanosine(1370) in 16S rRNA + S-adenosyl-L-methionine = 2'-O-methylguanosine(1370) in 16S rRNA + S-adenosyl-L-homocysteine + H(+). S-adenosyl-L-methionine-dependent 2'-O-ribose methyltransferase that catalyzes the formation of 2'-O-methylguanosine at position 1370 (Gm1370) in the 16S mitochondrial large subunit ribosomal RNA (mtLSU rRNA), a conserved modification in the peptidyl transferase domain of the mtLSU rRNA. Also required for formation of 2'-O-methyluridine at position 1369 (Um1369) mediated by MRM2. The protein is rRNA methyltransferase 3, mitochondrial of Mus musculus (Mouse).